Here is a 176-residue protein sequence, read N- to C-terminus: Small capsomere-interacting protein (176 aa).

2 disordered regions span residues 75 to 109 (DKRQ…ASAG) and 148 to 176 (ASAA…RKKQ). The segment covering 80–109 (ASVAGAGAHAHLGGSSATPVQQAQAAASAG) has biased composition (low complexity).

The protein belongs to the herpesviridae small capsomere-interacting protein family. In terms of assembly, interacts with the major capsid protein/MCP.

It is found in the virion. The protein resides in the host nucleus. In terms of biological role, participates in the assembly of the infectious particles by decorating the outer surface of the capsid shell and thus forming a layer between the capsid and the tegument. Complexes composed of the major capsid protein and small capsomere-interacting protein/SCP assemble together in the host cytoplasm and are translocated to the nucleus, where they accumulate and participate in capsid assembly. This chain is Small capsomere-interacting protein, found in Epstein-Barr virus (strain B95-8) (HHV-4).